Reading from the N-terminus, the 362-residue chain is Spermidine/putrescine import ATP-binding protein PotA (362 aa).

The ABC transporter domain maps to 6-236; sequence VELKHVGKRY…PVNHFVADFI (231 aa). Residue 38-45 coordinates ATP; it reads GPSGSGKT.

It belongs to the ABC transporter superfamily. Spermidine/putrescine importer (TC 3.A.1.11.1) family. As to quaternary structure, the complex is composed of two ATP-binding proteins (PotA), two transmembrane proteins (PotB and PotC) and a solute-binding protein (PotD).

The protein localises to the cell membrane. The enzyme catalyses ATP + H2O + polyamine-[polyamine-binding protein]Side 1 = ADP + phosphate + polyamineSide 2 + [polyamine-binding protein]Side 1.. Functionally, part of the ABC transporter complex PotABCD involved in spermidine/putrescine import. Responsible for energy coupling to the transport system. This is Spermidine/putrescine import ATP-binding protein PotA from Lacticaseibacillus paracasei (strain ATCC 334 / BCRC 17002 / CCUG 31169 / CIP 107868 / KCTC 3260 / NRRL B-441) (Lactobacillus paracasei).